Consider the following 194-residue polypeptide: Peptidyl-tRNA hydrolase (194 aa).

Tyr16 contributes to the tRNA binding site. The active-site Proton acceptor is the His21. Residues Phe67, Asn69, and Asn115 each coordinate tRNA.

Belongs to the PTH family. Monomer.

The protein resides in the cytoplasm. It catalyses the reaction an N-acyl-L-alpha-aminoacyl-tRNA + H2O = an N-acyl-L-amino acid + a tRNA + H(+). Functionally, hydrolyzes ribosome-free peptidyl-tRNAs (with 1 or more amino acids incorporated), which drop off the ribosome during protein synthesis, or as a result of ribosome stalling. Catalyzes the release of premature peptidyl moieties from peptidyl-tRNA molecules trapped in stalled 50S ribosomal subunits, and thus maintains levels of free tRNAs and 50S ribosomes. The chain is Peptidyl-tRNA hydrolase from Colwellia psychrerythraea (strain 34H / ATCC BAA-681) (Vibrio psychroerythus).